A 342-amino-acid polypeptide reads, in one-letter code: Non-homologous end-joining protein 1 (342 aa).

A run of 2 helical transmembrane segments spans residues 27–47 (LLLF…LVSL) and 129–149 (MFYM…NLST). The tract at residues 173 to 342 (LRDLDGGSKV…RKFGKVRIKN (170 aa)) is interaction with LIF1. The disordered stretch occupies residues 270–342 (ADPTNEARPN…RKFGKVRIKN (73 aa)). Residues 286-296 (PKTDFKPKSRE) are compositionally biased toward basic and acidic residues. A compositionally biased stretch (polar residues) spans 297-312 (SSTSSQLRLENFSESE). Residues 331 to 342 (KKRKFGKVRIKN) are compositionally biased toward basic residues.

The protein belongs to the XRCC4-XLF family. XLF subfamily. In terms of assembly, interacts (via C-terminus) with LIF1 (via N-terminus); the interaction is direct. Interacts with DNL4.

It localises to the cytoplasm. Its subcellular location is the nucleus membrane. Functionally, involved in non-homologous end joining (NHEJ). Facilitates the transport of LIF1 into the nucleus, where it can interact with DNA ligase DNL4 to repair double-strand breaks (DSB). Mediates mating-type regulation of NHEJ. Prevents chromosome circularisation by NHEJ in absence of telomerase. The polypeptide is Non-homologous end-joining protein 1 (NEJ1) (Saccharomyces cerevisiae (strain ATCC 204508 / S288c) (Baker's yeast)).